The following is a 360-amino-acid chain: Phospho-N-acetylmuramoyl-pentapeptide-transferase (360 aa).

10 consecutive transmembrane segments (helical) span residues 25–45 (RGILGVLTALALSLWLGPWMI), 73–93 (TMGGALILTAIAVSTLLWADL), 97–117 (YVWVVLAVTLLFGAIGWVDDY), 132–152 (WKYFWQSVFGLAAAIFLYMTA), 168–188 (VSIPLGIGFVVLTYFVIVGSS), 199–219 (GLAILPTVMVAGALAVFCYLS), 236–256 (AGELIVFCAALVGAGLGFLWF), 263–283 (VFMGDVGALALGAALGTIAVI), 288–308 (VVLFIMGGVFVMETLSVIIQV), and 338–358 (VIVRFWIITVILVLIGLATLK).

It belongs to the glycosyltransferase 4 family. MraY subfamily. It depends on Mg(2+) as a cofactor.

It is found in the cell inner membrane. It carries out the reaction UDP-N-acetyl-alpha-D-muramoyl-L-alanyl-gamma-D-glutamyl-meso-2,6-diaminopimeloyl-D-alanyl-D-alanine + di-trans,octa-cis-undecaprenyl phosphate = di-trans,octa-cis-undecaprenyl diphospho-N-acetyl-alpha-D-muramoyl-L-alanyl-D-glutamyl-meso-2,6-diaminopimeloyl-D-alanyl-D-alanine + UMP. It functions in the pathway cell wall biogenesis; peptidoglycan biosynthesis. Catalyzes the initial step of the lipid cycle reactions in the biosynthesis of the cell wall peptidoglycan: transfers peptidoglycan precursor phospho-MurNAc-pentapeptide from UDP-MurNAc-pentapeptide onto the lipid carrier undecaprenyl phosphate, yielding undecaprenyl-pyrophosphoryl-MurNAc-pentapeptide, known as lipid I. This chain is Phospho-N-acetylmuramoyl-pentapeptide-transferase, found in Ectopseudomonas mendocina (strain ymp) (Pseudomonas mendocina).